The following is a 153-amino-acid chain: SsrA-binding protein (153 aa).

The segment at 132 to 153 (REKDWLRERERVMKHDTRRRSD) is disordered.

This sequence belongs to the SmpB family.

The protein resides in the cytoplasm. Required for rescue of stalled ribosomes mediated by trans-translation. Binds to transfer-messenger RNA (tmRNA), required for stable association of tmRNA with ribosomes. tmRNA and SmpB together mimic tRNA shape, replacing the anticodon stem-loop with SmpB. tmRNA is encoded by the ssrA gene; the 2 termini fold to resemble tRNA(Ala) and it encodes a 'tag peptide', a short internal open reading frame. During trans-translation Ala-aminoacylated tmRNA acts like a tRNA, entering the A-site of stalled ribosomes, displacing the stalled mRNA. The ribosome then switches to translate the ORF on the tmRNA; the nascent peptide is terminated with the 'tag peptide' encoded by the tmRNA and targeted for degradation. The ribosome is freed to recommence translation, which seems to be the essential function of trans-translation. This is SsrA-binding protein from Bordetella avium (strain 197N).